Reading from the N-terminus, the 553-residue chain is Arginine--tRNA ligase (553 aa).

A 'HIGH' region motif is present at residues 130-140; that stretch reads ANPTGPIHLGG.

This sequence belongs to the class-I aminoacyl-tRNA synthetase family. As to quaternary structure, monomer.

Its subcellular location is the cytoplasm. It catalyses the reaction tRNA(Arg) + L-arginine + ATP = L-arginyl-tRNA(Arg) + AMP + diphosphate. This is Arginine--tRNA ligase from Corynebacterium aurimucosum (strain ATCC 700975 / DSM 44827 / CIP 107346 / CN-1) (Corynebacterium nigricans).